A 197-amino-acid polypeptide reads, in one-letter code: Nucleoside triphosphate pyrophosphatase (197 aa).

The active-site Proton acceptor is D71.

The protein belongs to the Maf family. A divalent metal cation is required as a cofactor.

The protein localises to the cytoplasm. The catalysed reaction is a ribonucleoside 5'-triphosphate + H2O = a ribonucleoside 5'-phosphate + diphosphate + H(+). It carries out the reaction a 2'-deoxyribonucleoside 5'-triphosphate + H2O = a 2'-deoxyribonucleoside 5'-phosphate + diphosphate + H(+). Functionally, nucleoside triphosphate pyrophosphatase. May have a dual role in cell division arrest and in preventing the incorporation of modified nucleotides into cellular nucleic acids. This chain is Nucleoside triphosphate pyrophosphatase, found in Synechococcus sp. (strain JA-2-3B'a(2-13)) (Cyanobacteria bacterium Yellowstone B-Prime).